The following is a 223-amino-acid chain: Histone H1.5 (223 aa).

Residues 1-14 (MSETAPAETAAPAP) are compositionally biased toward low complexity. The tract at residues 1-56 (MSETAPAETAAPAPVEKSPAKKKTTKKAGAAKRKATGPPVSELITKAVSASKERGG) is disordered. The residue at position 2 (S2) is an N-acetylserine. Residue S2 is modified to Phosphoserine. K17 bears the N6-acetyllysine mark. The residue at position 18 (S18) is a Phosphoserine. Basic residues predominate over residues 20–35 (AKKKTTKKAGAAKRKA). The residue at position 27 (K27) is an N6-methyllysine. K34 bears the N6-(beta-hydroxybutyryl)lysine; alternate mark. The residue at position 34 (K34) is an N6-succinyllysine; alternate. T36 carries the post-translational modification Phosphothreonine. One can recognise an H15 domain in the interval 36 to 109 (TGPPVSELIT…GASGSFKLNK (74 aa)). Residue K46 is modified to N6-acetyllysine. K52 carries the post-translational modification N6-(beta-hydroxybutyryl)lysine. R54 carries the citrulline modification. N6-(beta-hydroxybutyryl)lysine is present on K64. Residue K75 is modified to N6-acetyllysine. An N6-(beta-hydroxybutyryl)lysine mark is found at K85, K90, and K106. Residues 91–223 (GTLVQTKGTG…KAKKAVSKKK (133 aa)) form a disordered region. Residues 119–130 (KAKKTGAAKAKK) are compositionally biased toward basic residues. Phosphothreonine occurs at positions 135 and 152. Basic residues predominate over residues 137–158 (KKPKKTAGAKKTVKKTPKKAKK). N6-acetyllysine is present on K165. A compositionally biased stretch (basic residues) spans 166–184 (KVAKSPKKAKAAAKPKKAA). A phosphoserine mark is found at S170 and S186. Positions 191–223 (KAVKSKASKPKVTKPKTAKPKAAKAKKAVSKKK) are enriched in basic residues.

It belongs to the histone H1/H5 family. Interacts with MSX1. Post-translationally, H1 histones are progressively phosphorylated during the cell cycle, becoming maximally phosphorylated during late G2 phase and M phase, and being dephosphorylated sharply thereafter. In terms of processing, citrullination at Arg-54 (H1R54ci) by PADI4 takes place within the DNA-binding site of H1 and results in its displacement from chromatin and global chromatin decondensation, thereby promoting pluripotency and stem cell maintenance. Hydroxybutyrylation of histones is induced by starvation.

The protein localises to the nucleus. It is found in the chromosome. Functionally, histone H1 protein binds to linker DNA between nucleosomes forming the macromolecular structure known as the chromatin fiber. Histones H1 are necessary for the condensation of nucleosome chains into higher-order structured fibers. Also acts as a regulator of individual gene transcription through chromatin remodeling, nucleosome spacing and DNA methylation. The sequence is that of Histone H1.5 (H1-5) from Mus musculus (Mouse).